Here is a 450-residue protein sequence, read N- to C-terminus: 3-phosphoshikimate 1-carboxyvinyltransferase (450 aa).

3 residues coordinate 3-phosphoshikimate: K28, S29, and R33. Position 28 (K28) interacts with phosphoenolpyruvate. Phosphoenolpyruvate-binding residues include G100 and R128. S173, Q175, D326, and K353 together coordinate 3-phosphoshikimate. Residue Q175 coordinates phosphoenolpyruvate. D326 serves as the catalytic Proton acceptor. Phosphoenolpyruvate-binding residues include R357 and R402.

It belongs to the EPSP synthase family. Monomer.

Its subcellular location is the cytoplasm. It catalyses the reaction 3-phosphoshikimate + phosphoenolpyruvate = 5-O-(1-carboxyvinyl)-3-phosphoshikimate + phosphate. It functions in the pathway metabolic intermediate biosynthesis; chorismate biosynthesis; chorismate from D-erythrose 4-phosphate and phosphoenolpyruvate: step 6/7. Its function is as follows. Catalyzes the transfer of the enolpyruvyl moiety of phosphoenolpyruvate (PEP) to the 5-hydroxyl of shikimate-3-phosphate (S3P) to produce enolpyruvyl shikimate-3-phosphate and inorganic phosphate. This chain is 3-phosphoshikimate 1-carboxyvinyltransferase, found in Brucella abortus biovar 1 (strain 9-941).